A 435-amino-acid polypeptide reads, in one-letter code: Serine--tRNA ligase (435 aa).

241-243 (TAE) provides a ligand contact to L-serine. An ATP-binding site is contributed by 272–274 (RSE). L-serine is bound at residue glutamate 295. 359–362 (EISS) contacts ATP. Residue serine 395 participates in L-serine binding.

This sequence belongs to the class-II aminoacyl-tRNA synthetase family. Type-1 seryl-tRNA synthetase subfamily. Homodimer. The tRNA molecule binds across the dimer.

Its subcellular location is the cytoplasm. The catalysed reaction is tRNA(Ser) + L-serine + ATP = L-seryl-tRNA(Ser) + AMP + diphosphate + H(+). It catalyses the reaction tRNA(Sec) + L-serine + ATP = L-seryl-tRNA(Sec) + AMP + diphosphate + H(+). The protein operates within aminoacyl-tRNA biosynthesis; selenocysteinyl-tRNA(Sec) biosynthesis; L-seryl-tRNA(Sec) from L-serine and tRNA(Sec): step 1/1. In terms of biological role, catalyzes the attachment of serine to tRNA(Ser). Is also able to aminoacylate tRNA(Sec) with serine, to form the misacylated tRNA L-seryl-tRNA(Sec), which will be further converted into selenocysteinyl-tRNA(Sec). The chain is Serine--tRNA ligase from Actinobacillus pleuropneumoniae serotype 7 (strain AP76).